We begin with the raw amino-acid sequence, 288 residues long: Protoheme IX farnesyltransferase (288 aa).

9 helical membrane-spanning segments follow: residues 8–28 (ATKP…FLLA), 35–55 (YLIF…GCVL), 80–100 (ISIL…IYLL), 107–127 (LTML…TKCM), 132–152 (IYST…GYCA), 162–182 (LLLL…IAIL), 208–228 (IVIY…SGYT), 229–249 (TSYQ…YLAL), and 266–286 (FIFS…DSIF).

The protein belongs to the UbiA prenyltransferase family. Protoheme IX farnesyltransferase subfamily.

The protein localises to the cell membrane. It catalyses the reaction heme b + (2E,6E)-farnesyl diphosphate + H2O = Fe(II)-heme o + diphosphate. It functions in the pathway porphyrin-containing compound metabolism; heme O biosynthesis; heme O from protoheme: step 1/1. Functionally, converts heme B (protoheme IX) to heme O by substitution of the vinyl group on carbon 2 of heme B porphyrin ring with a hydroxyethyl farnesyl side group. The polypeptide is Protoheme IX farnesyltransferase (Baumannia cicadellinicola subsp. Homalodisca coagulata).